We begin with the raw amino-acid sequence, 356 residues long: Protein-arginine kinase (356 aa).

In terms of domain architecture, Phosphagen kinase C-terminal spans 24-256 (IIISSRVRVA…RQILAQEQAA (233 aa)). ATP contacts are provided by residues 27–31 (SSRVR), H93, R127, 178–182 (RASVM), and 209–214 (RGLYGE). Residues 339-344 (RDIFRA) carry the RDXXRA motif of the pArg binding pocket involved in allosteric regulation motif.

This sequence belongs to the ATP:guanido phosphotransferase family.

It carries out the reaction L-arginyl-[protein] + ATP = N(omega)-phospho-L-arginyl-[protein] + ADP + H(+). Appears to be allosterically activated by the binding of pArg-containing polypeptides to the pArg-binding pocket localized in the C-terminal domain of McsB. In terms of biological role, catalyzes the specific phosphorylation of arginine residues in proteins. The polypeptide is Protein-arginine kinase (Pelotomaculum thermopropionicum (strain DSM 13744 / JCM 10971 / SI)).